We begin with the raw amino-acid sequence, 104 residues long: Pyrimidine/purine nucleoside phosphorylase (104 aa).

Belongs to the nucleoside phosphorylase PpnP family.

It carries out the reaction a purine D-ribonucleoside + phosphate = a purine nucleobase + alpha-D-ribose 1-phosphate. The enzyme catalyses adenosine + phosphate = alpha-D-ribose 1-phosphate + adenine. The catalysed reaction is cytidine + phosphate = cytosine + alpha-D-ribose 1-phosphate. It catalyses the reaction guanosine + phosphate = alpha-D-ribose 1-phosphate + guanine. It carries out the reaction inosine + phosphate = alpha-D-ribose 1-phosphate + hypoxanthine. The enzyme catalyses thymidine + phosphate = 2-deoxy-alpha-D-ribose 1-phosphate + thymine. The catalysed reaction is uridine + phosphate = alpha-D-ribose 1-phosphate + uracil. It catalyses the reaction xanthosine + phosphate = alpha-D-ribose 1-phosphate + xanthine. Its function is as follows. Catalyzes the phosphorolysis of diverse nucleosides, yielding D-ribose 1-phosphate and the respective free bases. Can use uridine, adenosine, guanosine, cytidine, thymidine, inosine and xanthosine as substrates. Also catalyzes the reverse reactions. The sequence is that of Pyrimidine/purine nucleoside phosphorylase from Colwellia psychrerythraea (strain 34H / ATCC BAA-681) (Vibrio psychroerythus).